Here is an 89-residue protein sequence, read N- to C-terminus: Small ribosomal subunit protein uS14A (89 aa).

Belongs to the universal ribosomal protein uS14 family. In terms of assembly, part of the 30S ribosomal subunit. Contacts proteins S3 and S10.

Its function is as follows. Binds 16S rRNA, required for the assembly of 30S particles and may also be responsible for determining the conformation of the 16S rRNA at the A site. The polypeptide is Small ribosomal subunit protein uS14A (Staphylococcus epidermidis (strain ATCC 35984 / DSM 28319 / BCRC 17069 / CCUG 31568 / BM 3577 / RP62A)).